The sequence spans 540 residues: Homoserine O-acetyltransferase (540 aa).

The AB hydrolase-1 domain occupies 66–404 (NVILICHALT…QHGHDAFLLE (339 aa)). Catalysis depends on serine 171, which acts as the Nucleophile. Arginine 240 is a substrate binding site. A disordered region spans residues 262 to 284 (QDTDKSGIKGTTGTEGKNSSEIS). Active-site residues include aspartate 365 and histidine 398. Aspartate 399 contributes to the substrate binding site. CBS domains lie at 425–484 (MNRN…ELDE) and 486–540 (ITRD…GKYD).

This sequence belongs to the AB hydrolase superfamily. MetX family. In terms of assembly, homodimer.

It is found in the cytoplasm. It catalyses the reaction L-homoserine + acetyl-CoA = O-acetyl-L-homoserine + CoA. The protein operates within amino-acid biosynthesis; L-methionine biosynthesis via de novo pathway; O-acetyl-L-homoserine from L-homoserine: step 1/1. In terms of biological role, transfers an acetyl group from acetyl-CoA to L-homoserine, forming acetyl-L-homoserine. In vitro, can also use propionyl-CoA or butiryl-CoA as acyl donor. The polypeptide is Homoserine O-acetyltransferase (Methanosarcina acetivorans (strain ATCC 35395 / DSM 2834 / JCM 12185 / C2A)).